A 359-amino-acid polypeptide reads, in one-letter code: Mannonate dehydratase (359 aa).

This sequence belongs to the mannonate dehydratase family. The cofactor is Fe(2+). Requires Mn(2+) as cofactor.

It catalyses the reaction D-mannonate = 2-dehydro-3-deoxy-D-gluconate + H2O. It participates in carbohydrate metabolism; pentose and glucuronate interconversion. Its function is as follows. Catalyzes the dehydration of D-mannonate. The protein is Mannonate dehydratase (uxuA) of Bacillus subtilis (strain 168).